The following is a 525-amino-acid chain: Averantin hydroxylase (525 aa).

Residues 36 to 56 traverse the membrane as a helical segment; the sequence is VLATFVAGIGALLLWTLTTVF. The N-linked (GlcNAc...) asparagine glycan is linked to asparagine 315. Cysteine 462 serves as a coordination point for heme.

Belongs to the cytochrome P450 family. Heme is required as a cofactor.

Its subcellular location is the membrane. It catalyses the reaction (1'S)-averantin + reduced [NADPH--hemoprotein reductase] + O2 = (1'S,5'R)-5'-hydroxyaverantin + oxidized [NADPH--hemoprotein reductase] + H2O. The enzyme catalyses (1'S)-averantin + reduced [NADPH--hemoprotein reductase] + O2 = (1'S,5'S)-5'-hydroxyaverantin + oxidized [NADPH--hemoprotein reductase] + H2O + H(+). It functions in the pathway mycotoxin biosynthesis. Its function is as follows. Averantin hydroxylase; part of the fragmented gene cluster that mediates the biosynthesis of dothistromin (DOTH), a polyketide toxin very similar in structure to the aflatoxin precursor, versicolorin B. The first step of the pathway is the conversion of acetate to norsolorinic acid (NOR) and requires the fatty acid synthase subunits hexA and hexB, as well as the polyketide synthase pksA. PksA combines a hexanoyl starter unit and 7 malonyl-CoA extender units to synthesize the precursor NOR. The hexanoyl starter unit is provided to the acyl-carrier protein (ACP) domain by the fungal fatty acid synthase hexA/hexB. The second step is the conversion of NOR to averantin (AVN) and requires the norsolorinic acid ketoreductase nor1, which catalyzes the dehydration of norsolorinic acid to form (1'S)-averantin. The cytochrome P450 monooxygenase avnA then catalyzes the hydroxylation of AVN to 5'hydroxyaverantin (HAVN). The next step is performed by adhA that transforms HAVN to averufin (AVF). Averufin might then be converted to hydroxyversicolorone by cypX and avfA. Hydroxyversicolorone is further converted versiconal hemiacetal acetate (VHA) by moxY. VHA is then the substrate for the versiconal hemiacetal acetate esterase est1 to yield versiconal (VAL). Versicolorin B synthase vbsA then converts VAL to versicolorin B (VERB) by closing the bisfuran ring. Then, the activity of the versicolorin B desaturase verB leads to versicolorin A (VERA). DotB, a predicted chloroperoxidase, may perform epoxidation of the A-ring of VERA. Alternatively, a cytochrome P450, such as cypX or avnA could catalyze this step. It is also possible that another, uncharacterized, cytochrome P450 enzyme is responsible for this step. Opening of the epoxide could potentially be achieved by the epoxide hydrolase epoA. However, epoA seems not to be required for DOTH biosynthesis, but other epoxide hydrolases may have the ability to complement this hydrolysis. Alternatively, opening of the epoxide ring could be achieved non-enzymatically. The next step is the deoxygenation of ring A to yield the 5,8-dihydroxyanthraquinone which is most likely catalyzed by the NADPH dehydrogenase encoded by ver1. The last stages of DOTH biosynthesis are proposed to involve hydroxylation of the bisfuran. OrdB and norB might have oxidative roles here. An alternative possibility is that cytochrome P450 monoogenases such as avnA and cypX might perform these steps in addition to previously proposed steps. This chain is Averantin hydroxylase, found in Dothistroma septosporum (strain NZE10 / CBS 128990) (Red band needle blight fungus).